The chain runs to 248 residues: 2,3-bisphosphoglycerate-dependent phosphoglycerate mutase (248 aa).

Substrate-binding positions include 9-16 (RHGHSEWN), 22-23 (TG), R61, 88-91 (ERHY), K99, 115-116 (RR), and 183-184 (GN). Residue H10 is the Tele-phosphohistidine intermediate of the active site. The active-site Proton donor/acceptor is E88.

The protein belongs to the phosphoglycerate mutase family. BPG-dependent PGAM subfamily.

It carries out the reaction (2R)-2-phosphoglycerate = (2R)-3-phosphoglycerate. Its pathway is carbohydrate degradation; glycolysis; pyruvate from D-glyceraldehyde 3-phosphate: step 3/5. Its function is as follows. Catalyzes the interconversion of 2-phosphoglycerate and 3-phosphoglycerate. The protein is 2,3-bisphosphoglycerate-dependent phosphoglycerate mutase of Arthrobacter sp. (strain FB24).